We begin with the raw amino-acid sequence, 208 residues long: Glutathione S-transferase 2 (208 aa).

Positions 1–78 (MSYKLTYFSI…HLARKYNLNG (78 aa)) constitute a GST N-terminal domain. Glutathione-binding positions include Y7, K42, 49-50 (QL), and 62-63 (QS). One can recognise a GST C-terminal domain in the interval 80–200 (NEMETTYIDM…YCEKRDAAKV (121 aa)).

The protein belongs to the GST superfamily. Pi family. In terms of assembly, homodimer. As to expression, hypodermis, wall of the seminal receptacle and spermatozoa of adult worms.

The enzyme catalyses RX + glutathione = an S-substituted glutathione + a halide anion + H(+). Functionally, appears to play a central role in the parasite detoxification system. In Onchocerca volvulus, this protein is Glutathione S-transferase 2 (GST2).